Here is a 464-residue protein sequence, read N- to C-terminus: ESX-1 secretion system protein EccE1 (464 aa).

The next 2 helical transmembrane spans lie at 11 to 31 (FTTG…AICM) and 34 to 54 (DLLW…VLTI).

The protein belongs to the EccE family. In terms of assembly, part of the ESX-1 / type VII secretion system (T7SS), which is composed of cytosolic and membrane components. The ESX-1 membrane complex is composed of EccB1, EccCa1, EccCb1, EccD1 and EccE1.

The protein resides in the cell inner membrane. Part of the ESX-1 / type VII specialized secretion system (T7SS), which exports several proteins including EsxA and EsxB. Plays a role in DNA conjugation, in at least a donor strain. This is ESX-1 secretion system protein EccE1 from Mycolicibacterium smegmatis (strain ATCC 700084 / mc(2)155) (Mycobacterium smegmatis).